Here is a 131-residue protein sequence, read N- to C-terminus: D-ribose pyranase (131 aa).

Catalysis depends on H20, which acts as the Proton donor. Residues D28, H98, and 120-122 (YAN) contribute to the substrate site.

It belongs to the RbsD / FucU family. RbsD subfamily. Homodecamer.

The protein resides in the cytoplasm. It carries out the reaction beta-D-ribopyranose = beta-D-ribofuranose. Its pathway is carbohydrate metabolism; D-ribose degradation; D-ribose 5-phosphate from beta-D-ribopyranose: step 1/2. Functionally, catalyzes the interconversion of beta-pyran and beta-furan forms of D-ribose. In Bacillus cereus (strain B4264), this protein is D-ribose pyranase.